Consider the following 200-residue polypeptide: Holliday junction branch migration complex subunit RuvA (200 aa).

The interval 1 to 64 (MFAYFKGSLV…EDALQLYGFF (64 aa)) is domain I. The domain II stretch occupies residues 65-143 (KEEERQLFRL…KLPLVTPAAG (79 aa)). Positions 143–147 (GKAAM) are flexible linker. The interval 148-200 (PSHHVKDDAVHALVTLGFSRLLAQKAVSALLEEKPEQSVEEVIKYALATIHNS) is domain III.

Belongs to the RuvA family. As to quaternary structure, homotetramer. Forms an RuvA(8)-RuvB(12)-Holliday junction (HJ) complex. HJ DNA is sandwiched between 2 RuvA tetramers; dsDNA enters through RuvA and exits via RuvB. An RuvB hexamer assembles on each DNA strand where it exits the tetramer. Each RuvB hexamer is contacted by two RuvA subunits (via domain III) on 2 adjacent RuvB subunits; this complex drives branch migration. In the full resolvosome a probable DNA-RuvA(4)-RuvB(12)-RuvC(2) complex forms which resolves the HJ.

The protein resides in the cytoplasm. The RuvA-RuvB-RuvC complex processes Holliday junction (HJ) DNA during genetic recombination and DNA repair, while the RuvA-RuvB complex plays an important role in the rescue of blocked DNA replication forks via replication fork reversal (RFR). RuvA specifically binds to HJ cruciform DNA, conferring on it an open structure. The RuvB hexamer acts as an ATP-dependent pump, pulling dsDNA into and through the RuvAB complex. HJ branch migration allows RuvC to scan DNA until it finds its consensus sequence, where it cleaves and resolves the cruciform DNA. This chain is Holliday junction branch migration complex subunit RuvA, found in Chlorobium phaeobacteroides (strain DSM 266 / SMG 266 / 2430).